The chain runs to 25 residues: Caerin-1.17 (25 aa).

Leucine 25 carries the leucine amide modification.

The protein belongs to the frog skin active peptide (FSAP) family. Caerin subfamily. As to expression, expressed by the skin dorsal glands.

The protein localises to the secreted. Its function is as follows. Caerin-1.17 shows significant activity against Gram-positive organisms, but is less effective against Gram-negative organisms. The chain is Caerin-1.17 from Ranoidea gracilenta (Dainty green tree frog).